Consider the following 301-residue polypeptide: Enolase-phosphatase E1 (301 aa).

Residues D22 and E24 each contribute to the Mg(2+) site. Substrate contacts are provided by residues 163 to 164 (SS) and K197. D222 lines the Mg(2+) pocket. The interval 273–301 (AQAGDTEAKRSASGDGALAAKKAPPTHDF) is disordered.

It belongs to the HAD-like hydrolase superfamily. MasA/MtnC family. As to quaternary structure, monomer. Mg(2+) is required as a cofactor.

Its subcellular location is the cytoplasm. The protein localises to the nucleus. It carries out the reaction 5-methylsulfanyl-2,3-dioxopentyl phosphate + H2O = 1,2-dihydroxy-5-(methylsulfanyl)pent-1-en-3-one + phosphate. The protein operates within amino-acid biosynthesis; L-methionine biosynthesis via salvage pathway; L-methionine from S-methyl-5-thio-alpha-D-ribose 1-phosphate: step 3/6. Its pathway is amino-acid biosynthesis; L-methionine biosynthesis via salvage pathway; L-methionine from S-methyl-5-thio-alpha-D-ribose 1-phosphate: step 4/6. Functionally, bifunctional enzyme that catalyzes the enolization of 2,3-diketo-5-methylthiopentyl-1-phosphate (DK-MTP-1-P) into the intermediate 2-hydroxy-3-keto-5-methylthiopentenyl-1-phosphate (HK-MTPenyl-1-P), which is then dephosphorylated to form the acireductone 1,2-dihydroxy-3-keto-5-methylthiopentene (DHK-MTPene). The polypeptide is Enolase-phosphatase E1 (Monosiga brevicollis (Choanoflagellate)).